The sequence spans 96 residues: Protein TraA (96 aa).

This is Protein TraA (traA) from Escherichia coli.